A 150-amino-acid chain; its full sequence is 3-hydroxyacyl-[acyl-carrier-protein] dehydratase FabZ (150 aa).

The active site involves His-53.

This sequence belongs to the thioester dehydratase family. FabZ subfamily.

It is found in the cytoplasm. The enzyme catalyses a (3R)-hydroxyacyl-[ACP] = a (2E)-enoyl-[ACP] + H2O. Functionally, involved in unsaturated fatty acids biosynthesis. Catalyzes the dehydration of short chain beta-hydroxyacyl-ACPs and long chain saturated and unsaturated beta-hydroxyacyl-ACPs. The chain is 3-hydroxyacyl-[acyl-carrier-protein] dehydratase FabZ from Proteus mirabilis (strain HI4320).